Reading from the N-terminus, the 776-residue chain is Lysyl oxidase homolog 2 (776 aa).

A signal peptide spans 1-25 (MELHFGSCLSGCLALLVLLPSLSLA). 4 consecutive SRCR domains span residues 61–162 (VRLA…VVCS), 191–305 (IRPI…VSCV), 329–428 (VRLR…VRCN), and 438–546 (VRLN…VACS). Disulfide bonds link C87–C151, C100–C161, C131–C141, C221–C294, C234–C304, C268–C278, C354–C417, C367–C427, and C398–C408. A glycan (N-linked (GlcNAc...) asparagine) is linked at N267. N-linked (GlcNAc...) asparagine glycosylation is present at N291. The N-linked (GlcNAc...) asparagine glycan is linked to N458. 3 disulfides stabilise this stretch: C467-C532, C480-C545, and C514-C524. Residues 550-753 (PDLVLNAEIV…WMYNCHVGGA (204 aa)) are lysyl-oxidase like. Positions 551 and 552 each coordinate Ca(2+). Cystine bridges form between C575/C627, C581/C697, C659/C675, and C665/C687. 3 residues coordinate Cu cation: H628, H630, and H632. An N-linked (GlcNAc...) asparagine glycan is attached at N646. The segment at residues 655–691 (KASFCLEDTECEGDIQKSYECANFGEQGITMGCWDMY) is a cross-link (lysine tyrosylquinone (Lys-Tyr)). Y691 carries the post-translational modification 2',4',5'-topaquinone. Ca(2+)-binding residues include E724, D726, N729, and N730. C734 and C748 are joined by a disulfide.

Belongs to the lysyl oxidase family. As to quaternary structure, component of some chromatin repressor complex. Interacts with SNAI1. Interacts with TAF10. Interacts with HSPA5. Interacts with EFEMP2. Requires Cu cation as cofactor. Lysine tyrosylquinone residue is required as a cofactor. Post-translationally, the lysine tyrosylquinone cross-link (LTQ) is generated by condensation of the epsilon-amino group of a lysine with a topaquinone produced by oxidation of tyrosine. In terms of processing, N-glycosylated. N-glycosylation on Asn-458 and Asn-646 may be essential for proper folding and secretion; may be composed of a fucosylated carbohydrates attached to a trimannose N-linked glycan core. In terms of tissue distribution, ubiquitous. Highest expression in skin, lung and thymus. Present in chondrocytes: mainly expressed by chondrocytes in healing fractures and in epiphyseal growth plates (at protein level).

Its subcellular location is the secreted. The protein localises to the extracellular space. It localises to the extracellular matrix. The protein resides in the basement membrane. It is found in the nucleus. Its subcellular location is the chromosome. The protein localises to the endoplasmic reticulum. It carries out the reaction L-lysyl-[protein] + O2 + H2O = (S)-2-amino-6-oxohexanoyl-[protein] + H2O2 + NH4(+). Its activity is regulated as follows. Specifically inhibited by a mouse monoclonal antibody AB0023, inhibition occurs in a non-competitive manner. Functionally, mediates the post-translational oxidative deamination of lysine residues on target proteins leading to the formation of deaminated lysine (allysine). Acts as a transcription corepressor and specifically mediates deamination of trimethylated 'Lys-4' of histone H3 (H3K4me3), a specific tag for epigenetic transcriptional activation. Shows no activity against histone H3 when it is trimethylated on 'Lys-9' (H3K9me3) or 'Lys-27' (H3K27me3) or when 'Lys-4' is monomethylated (H3K4me1) or dimethylated (H3K4me2). Also mediates deamination of methylated TAF10, a member of the transcription factor IID (TFIID) complex, which induces release of TAF10 from promoters, leading to inhibition of TFIID-dependent transcription. LOXL2-mediated deamination of TAF10 results in transcriptional repression of genes required for embryonic stem cell pluripotency including POU5F1/OCT4, NANOG, KLF4 and SOX2. Involved in epithelial to mesenchymal transition (EMT) via interaction with SNAI1 and participates in repression of E-cadherin, probably by mediating deamination of histone H3. During EMT, involved with SNAI1 in negatively regulating pericentromeric heterochromatin transcription. SNAI1 recruits LOXL2 to pericentromeric regions to oxidize histone H3 and repress transcription which leads to release of heterochromatin component CBX5/HP1A, enabling chromatin reorganization and acquisition of mesenchymal traits. Interacts with the endoplasmic reticulum protein HSPA5 which activates the IRE1-XBP1 pathway of the unfolded protein response, leading to expression of several transcription factors involved in EMT and subsequent EMT induction. When secreted into the extracellular matrix, promotes cross-linking of extracellular matrix proteins by mediating oxidative deamination of peptidyl lysine residues in precursors to fibrous collagen and elastin. Acts as a regulator of sprouting angiogenesis, probably via collagen IV scaffolding. Acts as a regulator of chondrocyte differentiation, probably by regulating expression of factors that control chondrocyte differentiation. The polypeptide is Lysyl oxidase homolog 2 (Loxl2) (Mus musculus (Mouse)).